The primary structure comprises 74 residues: UPF0346 protein YozE (74 aa).

The protein belongs to the UPF0346 family.

The protein is UPF0346 protein YozE (yozE) of Bacillus subtilis (strain 168).